The chain runs to 530 residues: Trigger factor (530 aa).

The PPIase FKBP-type domain occupies 162–243; sequence DDLVTIDLAG…VTKVCEQELP (82 aa). Positions 432–530 are disordered; it reads NALELDRIQP…KTAAKDDKSK (99 aa). 2 stretches are compositionally biased toward basic and acidic residues: residues 459 to 478 and 501 to 512; these read SAEKADGKATEESKAEEKAP and KVVDAKSDDKPA.

This sequence belongs to the FKBP-type PPIase family. Tig subfamily.

The protein resides in the cytoplasm. It catalyses the reaction [protein]-peptidylproline (omega=180) = [protein]-peptidylproline (omega=0). In terms of biological role, involved in protein export. Acts as a chaperone by maintaining the newly synthesized protein in an open conformation. Functions as a peptidyl-prolyl cis-trans isomerase. The protein is Trigger factor of Cutibacterium acnes (strain DSM 16379 / KPA171202) (Propionibacterium acnes).